We begin with the raw amino-acid sequence, 1723 residues long: Lymphocyte antigen 75 (1723 aa).

The signal sequence occupies residues 1-27; it reads MRTGRVTPGLAAGLLLLLLRSFGLVEP. Topologically, residues 28–1667 are extracellular; it reads SESSGNDPFT…AVCKIPLSPD (1640 aa). Residues 33–182 form the Ricin B-type lectin domain; sequence NDPFTIVHEN…FLIGETWYHD (150 aa). Residue Asn-135 is glycosylated (N-linked (GlcNAc...) asparagine). One can recognise a Fibronectin type-II domain in the interval 164 to 211; sequence SYGRPCEFPFLIGETWYHDCIHDEDHSGPWCATTLSYEYDQKWGICLL. 4 disulfides stabilise this stretch: Cys-169/Cys-194, Cys-183/Cys-209, Cys-247/Cys-340, and Cys-317/Cys-332. Residues 225–341 enclose the C-type lectin 1 domain; it reads QIGSCYQFNN…CESQQPYVCK (117 aa). N-linked (GlcNAc...) asparagine glycans are attached at residues Asn-345 and Asn-377. C-type lectin domains follow at residues 368–486, 493–625, and 652–791; these read NNGF…YVCK, KDAE…ICKK, and SSLS…WVCQ. 2 disulfide bridges follow: Cys-389–Cys-485 and Cys-462–Cys-477. Asn-529 carries N-linked (GlcNAc...) asparagine glycosylation. 3 disulfide bridges follow: Cys-597-Cys-614, Cys-678-Cys-790, and Cys-752-Cys-782. Asn-843 and Asn-865 each carry an N-linked (GlcNAc...) asparagine glycan. Tyr-934 is modified (phosphotyrosine). N-linked (GlcNAc...) asparagine glycosylation is found at Asn-935, Asn-1077, and Asn-1104. The C-type lectin 5 domain maps to 959-1092; sequence FQNKCFLKVN…ERHSLSLCQK (134 aa). Cys-1061 and Cys-1081 are oxidised to a cystine. A C-type lectin 6 domain is found at 1111–1223; the sequence is YLNNLYKIIS…DNQPGAICYY (113 aa). A disulfide bridge links Cys-1198 with Cys-1212. 3 N-linked (GlcNAc...) asparagine glycosylation sites follow: Asn-1226, Asn-1321, and Asn-1393. A C-type lectin 7 domain is found at 1252-1375; the sequence is FQNSCYNFMI…VIEETLHFYQ (124 aa). C-type lectin domains lie at 1402–1514 and 1543–1662; these read YKDG…ICYK and YGGH…VCKI. Cys-1489 and Cys-1503 form a disulfide bridge. N-linked (GlcNAc...) asparagine glycosylation is found at Asn-1594 and Asn-1627. An intrachain disulfide couples Cys-1636 to Cys-1651. A helical membrane pass occupies residues 1668–1692; it reads YTGIAILFAVLCLLGLISLAIWFLL. Topologically, residues 1693-1723 are cytoplasmic; the sequence is QRSHIRWTGFSSVRYEHGTNEDEVMLPSFHD. Ser-1704 and Ser-1720 each carry phosphoserine.

In terms of processing, N-glycosylated. In terms of tissue distribution, expressed in dendritic and thymic epithelial cells and lymph nodes.

It is found in the membrane. Acts as an endocytic receptor to direct captured antigens from the extracellular space to a specialized antigen-processing compartment. Causes reduced proliferation of B lymphocytes. The chain is Lymphocyte antigen 75 (Ly75) from Mus musculus (Mouse).